A 464-amino-acid chain; its full sequence is Protein FAM90A18 (464 aa).

Disordered stretches follow at residues 1-42 (MMAR…DPRL), 70-387 (PATL…ASHD), and 415-437 (HSPEKPGAFLAQSPHVSEKSEAP). Basic and acidic residues-rich tracts occupy residues 74-89 (GKKEGKENLKPWKPRV) and 97-114 (NKDKGEKEERPRQQDPQR). The segment covering 180 to 197 (LASLSPLRKASLSSSSSL) has biased composition (low complexity).

Belongs to the FAM90 family.

The protein is Protein FAM90A18 of Homo sapiens (Human).